The following is a 146-amino-acid chain: MNSLSIFFIVVATAAVCLLFIQGYSIYENYGNIKEFNATHAAFEYSKSIGGTPALDRRVQDVNDTISDVKQKWRCVVYPGNGFVSASIFGFQAEVGPNNTRSIRKFNTMQQCIDFTFSDVININIYNPCVVPNINNAECQFLKSVL.

The chain crosses the membrane as a helical; Signal-anchor for type III membrane protein span at residues 1 to 21 (MNSLSIFFIVVATAAVCLLFI). At 22-146 (QGYSIYENYG…AECQFLKSVL (125 aa)) the chain is on the intravirion side.

This sequence belongs to the orthopoxvirus OPG155 protein family. In terms of assembly, part of a stable entry-fusion complex (EFC) which is at least composed of proteins OPG143, OPG147, OPG155, OPG086, OPG094, OPG107, OPG104, and OPG099. Formation of the viral membrane is necessary for the assembly of the complex. Interacts directly with protein OPG107. Contains two intramolecular disulfide bonds. They are created by the viral disulfide bond formation pathway, a poxvirus-specific pathway that operates on the cytoplasmic side of the MV membranes.

The protein localises to the virion membrane. Functionally, envelope protein required for virus entry into host cell and for cell-cell fusion (syncytium formation). The sequence is that of Envelope protein OPG155 (OPG155) from Vaccinia virus (strain Ankara) (VACV).